The chain runs to 1725 residues: MALNELGNCAPKYQTAYACEGKQLTIECEPGDLINLIRANYGRFSITICNDHGNVEWSVNCMFPKSLTVLNSKCSHKQSCSVLAATSMFGDPCPGTHKYLEAHYQCISAAQTSTTTNRPSPPPWVLSNGPPIFGNGSGLIQVPPPLPPRLPSLPGVVGIHGINAVQPTHSTPSSSTAALPGGRLKGVTSATTKHPGGRHDGLPPPPQLHHHHHHTDETVPTKPSSSSSSNSGSAGNVTSPSNTRILTGVGGAGSDDGTLLTTKSSPNRTPGTTASAANNSVNIGGAGTGSVVRTINNINLNAAGMGTDDESKLFCGAMHARNLFWNMTRVGDVNVQPCPGGAAGIAKWRCVLMKRLPDSGDDEYDDDLPAASSTTPQPSNNGGDCVHNSSSCEPPVSMAHKVNQRLRNFEPTWHPLTPDLTQCRSLWLNSLEMRVNQRDSSLTSIANDLSEVTSSKTLYGGDMLVTTKIIQTMSEKMLHDKETFPDQRQREAIIMELLHGVVKTGSNLLDESQLSSWLDLNPEDQMRVATSLLTGLEYNAFLLADTIIRERNVVQKVKNILLSVRVLETKTIHGSVVFPDSDQWPLSSDRIELPRTALLENSEGGLVRIVFAAFDRLESILKPSYDHFDLKSARSYVRNTAILSNDSDAATGDMQQRIRILNSKVISASLGKGRHIQLSQPITLVLKHLKTENVSNPTCVFWNYIDHAWSANGCSLESTNRTHSVCSCNHLTNFAILMDVVDEHQHSLFTMFDGNMRIFIYISVAICVVFIIIALLTLKLFNGVFVKSARTSIYSSIYICLLAIELLFLLGIEQTETSIFCGFITVFLHCAILSGTAWFCYEAFHSYSTLTSDELLLEVDQTPKVNCYYLLSYGLSLSVVAISLVIDPSTYTQNDYCVLMEANALFYSTFVAPVLIFFVAAITYTFLSWIIMRRKSRTALKTKEHTRLANVRFDIRCSFVFLLLLSVVWCCAYFYLRGAKLDEDGAPIYGYCFICFNTLLGIYIFVFHCIQNEKIRREYRKYVRQHAWLPKCLRCSKTSISSGVVAGNGGPGVGNTANQSAGTLSKSKSKLPLGAGDEARDGDAQQQQHDLPAAEDAIIMGAGSDCELNEAQQRRTLKSGLLTGSLQPAPVGAVVLERNTLRSTGMASVGHASPTSSAGSTHLIFAHKQQQQQQQQLQQPGETYYHQPDYYSWKHPPGGQREYYNNAGGAVGAAVGGVGGASPQQAHEVFYWTQKHNNQHGKKKRGGGAGAVPASPSGSLHSRATATSQVLFYPSYKKTTGMKQGPPPQQAYPHYAEALDPPNAAYYQQQLQQQQLRQQRQQQQQQLSSDEEQAEQHAHLLHLQHQQRRVGGQQLPAPPPHMAQYQQELLAQQQRQQYRNKHSNCDLSQGMGLGINMGMGHGDAYYNQGGSSNGGGDAGGPVYEEILSNRNSDVQHYEVGDFDVDEVYNNSVGTGVFNNMRAAVAAGGSRYGGGSLSGGSVTSRSQQQQQQQLKQKQPPRRCAADDDDDDDDDDDEYDDEVTAAEQLHDSVCDDEDNESDIDDDTHGLPPQSDERMRRLMALQDEDFKRRFQRQQRKNGMPLDYGASVQSAAAAHPDHNGAVFGVSGGVGEGSMRGAYRQQQTAKSPNARLAVNELFGHGNAGPPLPPANQTPAQKRQQLQKLSPQSTTSSSSHTSHSNPQHAPAHHLQHHHTQQQQQQQQQARHLSAMLDENNTVRCYLEPLAK.

Over 1 to 757 (MALNELGNCA…LFTMFDGNMR (757 aa)) the chain is Extracellular. In terms of domain architecture, SUEL-type lectin spans 18-107 (ACEGKQLTIE…KYLEAHYQCI (90 aa)). The N-linked (GlcNAc...) asparagine glycan is linked to Asn135. The segment at 164–284 (AVQPTHSTPS…SAANNSVNIG (121 aa)) is disordered. Low complexity-rich tracts occupy residues 167 to 176 (PTHSTPSSST) and 224 to 236 (SSSS…SAGN). Asn236, Asn278, Asn326, Asn388, Asn645, Asn693, and Asn720 each carry an N-linked (GlcNAc...) asparagine glycan. Over residues 259 to 282 (LLTTKSSPNRTPGTTASAANNSVN) the composition is skewed to polar residues. Positions 361 to 390 (DDEYDDDLPAASSTTPQPSNNGGDCVHNSS) are disordered. Positions 371 to 390 (ASSTTPQPSNNGGDCVHNSS) are enriched in polar residues. Residues 551 to 744 (RNVVQKVKNI…AILMDVVDEH (194 aa)) enclose the GAIN-B domain. 2 disulfide bridges follow: Cys699–Cys726 and Cys714–Cys728. The interval 699–744 (CVFWNYIDHAWSANGCSLESTNRTHSVCSCNHLTNFAILMDVVDEH) is GPS. A helical membrane pass occupies residues 758-778 (IFIYISVAICVVFIIIALLTL). The Cytoplasmic portion of the chain corresponds to 779–791 (KLFNGVFVKSART). A helical transmembrane segment spans residues 792–812 (SIYSSIYICLLAIELLFLLGI). Residues 813-818 (EQTETS) lie on the Extracellular side of the membrane. Residues 819–839 (IFCGFITVFLHCAILSGTAWF) traverse the membrane as a helical segment. The Cytoplasmic segment spans residues 840 to 865 (CYEAFHSYSTLTSDELLLEVDQTPKV). The helical transmembrane segment at 866 to 886 (NCYYLLSYGLSLSVVAISLVI) threads the bilayer. The Extracellular segment spans residues 887-910 (DPSTYTQNDYCVLMEANALFYSTF). A helical transmembrane segment spans residues 911–931 (VAPVLIFFVAAITYTFLSWII). Residues 932–958 (MRRKSRTALKTKEHTRLANVRFDIRCS) are Cytoplasmic-facing. A helical transmembrane segment spans residues 959-979 (FVFLLLLSVVWCCAYFYLRGA). The Extracellular segment spans residues 980–986 (KLDEDGA). The chain crosses the membrane as a helical span at residues 987 to 1007 (PIYGYCFICFNTLLGIYIFVF). Over 1008-1725 (HCIQNEKIRR…VRCYLEPLAK (718 aa)) the chain is Cytoplasmic. The interval 1056–1088 (TANQSAGTLSKSKSKLPLGAGDEARDGDAQQQQ) is disordered. Ser1153 carries the phosphoserine modification. Disordered regions lie at residues 1236-1263 (HNNQ…LHSR), 1309-1337 (QQLQ…AEQH), 1472-1555 (GGGS…SDER), and 1636-1705 (LFGH…QARH). The segment covering 1237 to 1246 (NNQHGKKKRG) has biased composition (basic residues). Phosphoserine is present on residues Ser1255 and Ser1262. The segment covering 1309–1327 (QQLQQQQLRQQRQQQQQQL) has biased composition (low complexity). 2 positions are modified to phosphoserine: Ser1328 and Ser1329. Over residues 1478 to 1496 (GGSVTSRSQQQQQQQLKQK) the composition is skewed to low complexity. Composition is skewed to acidic residues over residues 1505–1522 (DDDD…DEVT) and 1532–1543 (CDDEDNESDIDD). The segment covering 1651–1666 (QTPAQKRQQLQKLSPQ) has biased composition (polar residues). The segment covering 1667–1683 (STTSSSSHTSHSNPQHA) has biased composition (low complexity). Basic residues predominate over residues 1684-1693 (PAHHLQHHHT). Over residues 1694-1705 (QQQQQQQQQARH) the composition is skewed to low complexity.

The protein belongs to the G-protein coupled receptor 2 family. LN-TM7 subfamily. In terms of assembly, forms a heterodimer, consisting of a large extracellular region non-covalently linked to a seven-transmembrane moiety. In terms of processing, proteolytically cleaved into 2 subunits, an extracellular subunit and a seven-transmembrane subunit.

The protein resides in the cell membrane. The sequence is that of Latrophilin Cirl from Drosophila mojavensis (Fruit fly).